Reading from the N-terminus, the 375-residue chain is Putative F-box protein At1g12190 (375 aa).

Residues 1–46 form the F-box domain; sequence MACVKFPWELMEEILYRVPSLSLSRFKTVSKEWNTLLNDKTFIKKH.

This Arabidopsis thaliana (Mouse-ear cress) protein is Putative F-box protein At1g12190.